Reading from the N-terminus, the 218-residue chain is Ras-related protein RABE1e (218 aa).

Residue 22–29 (GDSGVGKS) coordinates GTP. The Effector region signature appears at 44–52 (FITTIGIDF). GTP is bound by residues 70–74 (DTAGQ), 128–131 (NKAD), and 159–160 (SA). A disordered region spans residues 182–218 (TESDTKAEPQGIKITKQDANKASSSSTNEKSACCSYV). Positions 201 to 211 (NKASSSSTNEK) are enriched in polar residues. S-geranylgeranyl cysteine attachment occurs at residues C214 and C215.

It belongs to the small GTPase superfamily. Rab family. Interacts with PI5K2.

The protein resides in the golgi apparatus membrane. It is found in the cell membrane. Functionally, involved in membrane trafficking from the Golgi to the plasma membrane. The sequence is that of Ras-related protein RABE1e (RABE1E) from Arabidopsis thaliana (Mouse-ear cress).